The following is a 278-amino-acid chain: Rhamnulose-1-phosphate aldolase (278 aa).

E116 is an active-site residue. Positions 139, 141, and 210 each coordinate Zn(2+).

This sequence belongs to the aldolase class II family. RhaD subfamily. It depends on Zn(2+) as a cofactor.

The protein resides in the cytoplasm. It carries out the reaction L-rhamnulose 1-phosphate = (S)-lactaldehyde + dihydroxyacetone phosphate. The protein operates within carbohydrate degradation; L-rhamnose degradation; glycerone phosphate from L-rhamnose: step 3/3. Functionally, catalyzes the reversible cleavage of L-rhamnulose-1-phosphate to dihydroxyacetone phosphate (DHAP) and L-lactaldehyde. In Listeria welshimeri serovar 6b (strain ATCC 35897 / DSM 20650 / CCUG 15529 / CIP 8149 / NCTC 11857 / SLCC 5334 / V8), this protein is Rhamnulose-1-phosphate aldolase.